The following is a 225-amino-acid chain: KDP operon transcriptional regulatory protein KdpE (225 aa).

Residues 3–116 form the Response regulatory domain; that stretch reads NVLIVEDEQA…ELQARLRVAL (114 aa). D52 bears the 4-aspartylphosphate mark. The segment at residues 126 to 225 is a DNA-binding region (ompR/PhoB-type); that stretch reads DPLVKFSDVT…ETGIGYRFML (100 aa).

Phosphorylated by KdpD.

It localises to the cytoplasm. Its function is as follows. Member of the two-component regulatory system KdpD/KdpE involved in the regulation of the kdp operon. The protein is KDP operon transcriptional regulatory protein KdpE (kdpE) of Escherichia coli (strain K12).